A 392-amino-acid polypeptide reads, in one-letter code: Spermatogenesis associated 6-like protein (392 aa).

A phosphoserine mark is found at serine 260 and serine 263. Over residues 286–301 the composition is skewed to low complexity; sequence SCLDSSQFGKSSSSKQ. The tract at residues 286 to 305 is disordered; that stretch reads SCLDSSQFGKSSSSKQGDAD.

Belongs to the SPATA6 family.

This Homo sapiens (Human) protein is Spermatogenesis associated 6-like protein (SPATA6L).